Here is a 404-residue protein sequence, read N- to C-terminus: Argininosuccinate synthase (404 aa).

Residues 10–18 (AYSGGVDTS) and Ala-38 contribute to the ATP site. L-citrulline is bound at residue Tyr-89. Position 119 (Gly-119) interacts with ATP. Residues Thr-121, Asn-125, and Asp-126 each contribute to the L-aspartate site. Residue Asn-125 coordinates L-citrulline. The L-citrulline site is built by Arg-129, Ser-177, Ser-186, Glu-262, and Tyr-274.

It belongs to the argininosuccinate synthase family. Type 1 subfamily. In terms of assembly, homotetramer.

Its subcellular location is the cytoplasm. The catalysed reaction is L-citrulline + L-aspartate + ATP = 2-(N(omega)-L-arginino)succinate + AMP + diphosphate + H(+). The protein operates within amino-acid biosynthesis; L-arginine biosynthesis; L-arginine from L-ornithine and carbamoyl phosphate: step 2/3. In Prochlorococcus marinus (strain MIT 9515), this protein is Argininosuccinate synthase.